The primary structure comprises 507 residues: MKTTLVSTPLAQLETELLAVFATDTAPAADMANGTQASPQVQLLTRDAALDAAVKTILASGDFKAEANETLLIHAPQGMAARRLLLVGAGKQARFTVHALRKAAGSAVRAARAKNIREATLAIPQSQGLDVTATARALGHGAAVADFDPDFYRSDRKDKSLQSLTLALPEATDANAAEAGLREGIALGESQNLTRTLVNEPGNRLTPTLLGEQAKKMCAEQGLRCQVYSSEKLHELKMGSFWSVTQGSDEPPALIVMEYTPEGAAEGPVLGLVGKGITFDSGGLSLKPADSMEKMKYDMAGAAAMIGAMRAIALLKPRIKVISVICSAENMPSGKAQKPGDVQISMIGKSIEVLNTDAEGRLVLADGLAYAKQLGATHLIDAATLTGAVMVALGGVNAGVFCNDEEAWQHFEAALGQSGEKFWRLPLDEEYREMLRSPIADIKNVGGRYGGASTAAMFLKEFVGDTPWVHLDIAGTAWMDEAKPWMSSGPSGIAMPSIVEWVRSFAR.

Mn(2+) is bound by residues Lys275 and Asp280. Residue Lys287 is part of the active site. Residues Asp298, Asp357, and Glu359 each coordinate Mn(2+). Arg361 is a catalytic residue.

This sequence belongs to the peptidase M17 family. The cofactor is Mn(2+).

The protein localises to the cytoplasm. It catalyses the reaction Release of an N-terminal amino acid, Xaa-|-Yaa-, in which Xaa is preferably Leu, but may be other amino acids including Pro although not Arg or Lys, and Yaa may be Pro. Amino acid amides and methyl esters are also readily hydrolyzed, but rates on arylamides are exceedingly low.. It carries out the reaction Release of an N-terminal amino acid, preferentially leucine, but not glutamic or aspartic acids.. Functionally, presumably involved in the processing and regular turnover of intracellular proteins. Catalyzes the removal of unsubstituted N-terminal amino acids from various peptides. In Acidobacterium capsulatum (strain ATCC 51196 / DSM 11244 / BCRC 80197 / JCM 7670 / NBRC 15755 / NCIMB 13165 / 161), this protein is Probable cytosol aminopeptidase.